Reading from the N-terminus, the 349-residue chain is Fructose-1,6-bisphosphatase class 1 (349 aa).

Glu-113, Asp-135, Ile-137, and Asp-138 together coordinate Mg(2+). Residues 138–141 (DGSS), Asn-230, Tyr-258, and Lys-288 contribute to the substrate site. Glu-294 contributes to the Mg(2+) binding site.

Belongs to the FBPase class 1 family. In terms of assembly, homotetramer. Mg(2+) serves as cofactor.

Its subcellular location is the cytoplasm. The enzyme catalyses beta-D-fructose 1,6-bisphosphate + H2O = beta-D-fructose 6-phosphate + phosphate. It functions in the pathway carbohydrate biosynthesis; Calvin cycle. The chain is Fructose-1,6-bisphosphatase class 1 from Nostoc punctiforme (strain ATCC 29133 / PCC 73102).